The following is a 514-amino-acid chain: 2-isopropylmalate synthase (514 aa).

One can recognise a Pyruvate carboxyltransferase domain in the interval 4-266; sequence INVFDTSLRD…KTGLKLSELK (263 aa). Aspartate 13, histidine 201, histidine 203, and asparagine 237 together coordinate Mn(2+). Positions 390 to 514 are regulatory domain; sequence ELTALQVTYG…AKREMAKVES (125 aa).

It belongs to the alpha-IPM synthase/homocitrate synthase family. LeuA type 1 subfamily. In terms of assembly, homodimer. It depends on Mn(2+) as a cofactor.

It is found in the cytoplasm. The catalysed reaction is 3-methyl-2-oxobutanoate + acetyl-CoA + H2O = (2S)-2-isopropylmalate + CoA + H(+). The protein operates within amino-acid biosynthesis; L-leucine biosynthesis; L-leucine from 3-methyl-2-oxobutanoate: step 1/4. In terms of biological role, catalyzes the condensation of the acetyl group of acetyl-CoA with 3-methyl-2-oxobutanoate (2-ketoisovalerate) to form 3-carboxy-3-hydroxy-4-methylpentanoate (2-isopropylmalate). This chain is 2-isopropylmalate synthase, found in Shouchella clausii (strain KSM-K16) (Alkalihalobacillus clausii).